The chain runs to 457 residues: tRNA-2-methylthio-N(6)-dimethylallyladenosine synthase (457 aa).

One can recognise an MTTase N-terminal domain in the interval Lys3–Glu120. Residues Cys12, Cys49, Cys83, Cys157, Cys161, and Cys164 each coordinate [4Fe-4S] cluster. The region spanning Arg143 to Arg377 is the Radical SAM core domain. One can recognise a TRAM domain in the interval Gln380–Leu447.

Belongs to the methylthiotransferase family. MiaB subfamily. As to quaternary structure, monomer. [4Fe-4S] cluster serves as cofactor.

The protein resides in the cytoplasm. It carries out the reaction N(6)-dimethylallyladenosine(37) in tRNA + (sulfur carrier)-SH + AH2 + 2 S-adenosyl-L-methionine = 2-methylsulfanyl-N(6)-dimethylallyladenosine(37) in tRNA + (sulfur carrier)-H + 5'-deoxyadenosine + L-methionine + A + S-adenosyl-L-homocysteine + 2 H(+). Functionally, catalyzes the methylthiolation of N6-(dimethylallyl)adenosine (i(6)A), leading to the formation of 2-methylthio-N6-(dimethylallyl)adenosine (ms(2)i(6)A) at position 37 in tRNAs that read codons beginning with uridine. This chain is tRNA-2-methylthio-N(6)-dimethylallyladenosine synthase, found in Burkholderia lata (strain ATCC 17760 / DSM 23089 / LMG 22485 / NCIMB 9086 / R18194 / 383).